The sequence spans 268 residues: MNALEEILDGVRADLAVRERETSLAALKQRVERVPDPRDALAVLRAPRVSVIAEIKRRSPSRGALATIADPAALASLYEQAGAAAVSVLTEQRRFGGSLADLDAVRVAVDIPVLRKDFVISPYQVLEARAHGADMVLLIVAALDQPRLIGLLERVESLGMTALVEVHDETEMLRALDAGARLVGVNARNLRTLEVDRETFARLAPMVPQGVLKVAESGVRGPRDLLQYAGAGADAVLVGEAAVTGGDPRQFVADLVTAGTHPATRIAH.

The protein belongs to the TrpC family.

The enzyme catalyses 1-(2-carboxyphenylamino)-1-deoxy-D-ribulose 5-phosphate + H(+) = (1S,2R)-1-C-(indol-3-yl)glycerol 3-phosphate + CO2 + H2O. The protein operates within amino-acid biosynthesis; L-tryptophan biosynthesis; L-tryptophan from chorismate: step 4/5. The protein is Indole-3-glycerol phosphate synthase of Parafrankia sp. (strain EAN1pec).